The primary structure comprises 387 residues: Alanine racemase (387 aa).

Lysine 48 functions as the Proton acceptor; specific for D-alanine in the catalytic mechanism. Position 48 is an N6-(pyridoxal phosphate)lysine (lysine 48). Arginine 146 lines the substrate pocket. Tyrosine 267 (proton acceptor; specific for L-alanine) is an active-site residue. Residue methionine 315 participates in substrate binding.

The protein belongs to the alanine racemase family. It depends on pyridoxal 5'-phosphate as a cofactor.

It carries out the reaction L-alanine = D-alanine. It functions in the pathway amino-acid biosynthesis; D-alanine biosynthesis; D-alanine from L-alanine: step 1/1. Its function is as follows. Catalyzes the interconversion of L-alanine and D-alanine. May also act on other amino acids. The sequence is that of Alanine racemase (alr) from Methylacidiphilum infernorum (isolate V4) (Methylokorus infernorum (strain V4)).